The primary structure comprises 353 residues: Photosystem II protein D1 (353 aa).

An N-acetylthreonine modification is found at Thr-2. Thr-2 carries the phosphothreonine modification. Transmembrane regions (helical) follow at residues Tyr-29 to Ser-46, His-118 to Leu-133, and Trp-142 to Ala-156. Residue His-118 coordinates chlorophyll a. Tyr-126 contributes to the pheophytin a binding site. Residues Asp-170 and Glu-189 each contribute to the [CaMn4O5] cluster site. Residues Phe-197–Leu-218 form a helical membrane-spanning segment. Position 198 (His-198) interacts with chlorophyll a. Residues His-215 and Ser-264–Phe-265 contribute to the a quinone site. His-215 lines the Fe cation pocket. His-272 provides a ligand contact to Fe cation. Residues Phe-274 to Leu-288 traverse the membrane as a helical segment. Positions 332, 333, 342, and 344 each coordinate [CaMn4O5] cluster. The propeptide occupies Ser-345 to Ala-353.

Belongs to the reaction center PufL/M/PsbA/D family. In terms of assembly, PSII is composed of 1 copy each of membrane proteins PsbA, PsbB, PsbC, PsbD, PsbE, PsbF, PsbH, PsbI, PsbJ, PsbK, PsbL, PsbM, PsbT, PsbX, PsbY, PsbZ, Psb30/Ycf12, at least 3 peripheral proteins of the oxygen-evolving complex and a large number of cofactors. It forms dimeric complexes. Requires The D1/D2 heterodimer binds P680, chlorophylls that are the primary electron donor of PSII, and subsequent electron acceptors. It shares a non-heme iron and each subunit binds pheophytin, quinone, additional chlorophylls, carotenoids and lipids. D1 provides most of the ligands for the Mn4-Ca-O5 cluster of the oxygen-evolving complex (OEC). There is also a Cl(-1) ion associated with D1 and D2, which is required for oxygen evolution. The PSII complex binds additional chlorophylls, carotenoids and specific lipids. as cofactor. Post-translationally, the 9 C-terminal residues are removed, probably by CTPA (AC O04073); processing is essential to allow assembly of the oxygen-evolving complex and thus photosynthetic growth. Tyr-161 forms a radical intermediate that is referred to as redox-active TyrZ, YZ or Y-Z.

The protein localises to the plastid. It is found in the chloroplast thylakoid membrane. It carries out the reaction 2 a plastoquinone + 4 hnu + 2 H2O = 2 a plastoquinol + O2. In terms of biological role, photosystem II (PSII) is a light-driven water:plastoquinone oxidoreductase that uses light energy to abstract electrons from H(2)O, generating O(2) and a proton gradient subsequently used for ATP formation. It consists of a core antenna complex that captures photons, and an electron transfer chain that converts photonic excitation into a charge separation. The D1/D2 (PsbA/PsbD) reaction center heterodimer binds P680, the primary electron donor of PSII as well as several subsequent electron acceptors. The sequence is that of Photosystem II protein D1 from Tetradesmus obliquus (Green alga).